The sequence spans 251 residues: uncharacterized protein (251 aa).

The N-terminal stretch at 1 to 19 (MRYLKRITIYISLLILVSG) is a signal peptide. Cys-20 is lipidated: N-palmitoyl cysteine. Cys-20 is lipidated: S-diacylglycerol cysteine.

Belongs to the staphylococcal tandem lipoprotein family.

The protein localises to the cell membrane. This is an uncharacterized protein from Staphylococcus epidermidis (strain ATCC 12228 / FDA PCI 1200).